A 22-amino-acid chain; its full sequence is thr operon leader peptide (22 aa).

Belongs to the thr operon leader peptide family.

This protein is involved in control of the biosynthesis of threonine. In Yersinia pestis bv. Antiqua (strain Antiqua), this protein is thr operon leader peptide.